Consider the following 300-residue polypeptide: B1 kinase (300 aa).

Residues 16–282 form the Protein kinase domain; that stretch reads WVVGPLIGKG…ITMVNSLTYF (267 aa). Residues 22–30 and Lys45 contribute to the ATP site; that span reads IGKGGFGSI. Asp147 functions as the Proton acceptor in the catalytic mechanism.

Belongs to the protein kinase superfamily. Ser/Thr protein kinase family. Poxviruses subfamily. Interacts with host JIP1; this interaction increases the amount of MAPK bound to JIP1 and subsequently increases the activity of transcription factors, such as JUN, that respond to these complexes. Interacts with protein OPG198; this interaction inhibits the repressive activity of OPG198 pseudokinase on viral replication factory formation. Mg(2+) is required as a cofactor. In terms of processing, autophosphorylated.

The protein resides in the virion. The protein localises to the host cytoplasm. It carries out the reaction L-seryl-[protein] + ATP = O-phospho-L-seryl-[protein] + ADP + H(+). The enzyme catalyses L-threonyl-[protein] + ATP = O-phospho-L-threonyl-[protein] + ADP + H(+). Its function is as follows. Essential serine/threonine-protein kinase that plays different role in the viral life cycle. Phosphorylates the host small ribosomal protein RACK1 thereby customizing the ribosomes to a state optimal for viral mRNAs (which contain poly-A leaders) but not for host mRNAs. Facilitates viral DNA replication by inhibiting host BANF1, a cellular host defense responsive to foreign DNA. Phosphorylates host BANF1 on serine and threonine residues; this leads to BANF1 relocalization to the cytoplasm, loss of dimerization and impaired DNA binding activity. Indeed, BANF1 activity depends on its DNA-binding property which is blocked by VPK1-mediated phosphorylation. Required for viral intermediate genes expression, probably by inhibiting host BANF1. Modulates cellular responses via host JUN by two different mechanisms, either by direct phosphorylation or by modulation of upstream JIP1-MAPK complexes. Seems to participate in the accumulation/processing of late proteins and thus in virion maturation. In addition, inhibits B12 repressive activity on viral DNA replication via a phosphorylation-dependent mechanism. The chain is B1 kinase (OPG187) from Vaccinia virus (strain Ankara) (VACV).